Consider the following 297-residue polypeptide: 6-dehydroglucose reductase (297 aa).

Trp-20, Arg-21, and Asp-49 together coordinate NADP(+). Catalysis depends on Tyr-54, which acts as the Proton donor. Residues Tyr-54, Lys-98, His-129, and Arg-130 each coordinate D-glucose. Positions 159, 160, 181, 211, 213, 215, 261, 262, 263, and 267 each coordinate NADP(+).

The protein belongs to the aldo/keto reductase family. As to quaternary structure, homotrimer.

The catalysed reaction is D-glucose + NADP(+) = 6-dehydro-D-glucose + NADPH + H(+). Part of the sulfoquinovose monooxygenase (sulfo-SMO) pathway, a D-sulfoquinovose degradation pathway that enables the complete utilization of all carbons within sulfoquinovose (SQ) with concomitant production of inorganic sulfite. Catalyzes the NADP-dependent reduction of 6-dehydro-D-glucose to D-glucose. Cannot use NADH. The sequence is that of 6-dehydroglucose reductase from Agrobacterium fabrum (strain C58 / ATCC 33970) (Agrobacterium tumefaciens (strain C58)).